A 366-amino-acid chain; its full sequence is Putative ankyrin repeat protein RBE_0601 (366 aa).

6 ANK repeats span residues 39 to 68, 94 to 124, 131 to 160, 162 to 186, 210 to 239, and 250 to 280; these read KHGTALNRAIKLKDEKIITELLAKKVDINE, LPDEYLYKAVHQGRLDLVQYFIEEKNFDVNT, HGGAILSIATMGEHIDVINYLLKNGAIASQ, VISAILKGNIEILEKLFEYGATAHD, KSSNSETKEDLSNYVETLKFLLEHGGNPNA, and IALSALMDEPKNDTYKDICKLLIQYGADTSK.

The sequence is that of Putative ankyrin repeat protein RBE_0601 from Rickettsia bellii (strain RML369-C).